Consider the following 590-residue polypeptide: Plasmepsin V (590 aa).

Topologically, residues methionine 1–serine 544 are lumenal. Residues cysteine 33–alanine 81 adopt a coiled-coil conformation. Residues tyrosine 100–isoleucine 514 form the Peptidase A1 domain. Aspartate 118 is an active-site residue. Disulfide bonds link cysteine 128-cysteine 211, cysteine 131-cysteine 134, cysteine 155-cysteine 166, cysteine 160-cysteine 171, cysteine 259-cysteine 518, cysteine 389-cysteine 434, and cysteine 443-cysteine 479. The span at lysine 282–aspartate 291 shows a compositional bias: basic and acidic residues. Residues lysine 282–asparagine 316 are disordered. Residues asparagine 292–leucine 304 are compositionally biased toward low complexity. Aspartate 365 is a catalytic residue. A helical membrane pass occupies residues tyrosine 545 to leucine 565. Topologically, residues tyrosine 566–threonine 590 are cytoplasmic.

It belongs to the peptidase A1 family. Component of a complex composed of SPC25 and PMV; the interaction is mediated via the transmembrane domains. The complex interacts with the SEC61 channel-forming translocon complex and is involved in the recognition and import of PEXEL motif-containing proteins into the ER for subsequent export. Post-translationally, it is not clear if the zymogen has a cleavable propeptide. In vitro, appears to be cleaved between Asn-80 and Ala-81. Cleavage of the putative propeptide is dispensable for catalytic activity.

It is found in the endoplasmic reticulum membrane. Its activity is regulated as follows. Inhibited by peptidomimetic inhibitor WEHI-842. Inhibited by Cu(2+) and Hg(2+). In terms of biological role, during the asexual blood stage, plays an essential role in the export of several proteins into the host erythrocytes by cleaving the pentameric localization motif RxLxE/Q/D (termed Plasmodium export element (PEXEL)) located downstream of the N-terminal secretory signal sequence. Specifically, cleaves after the leucine residue in the RxLxE/Q/D (or RxLxxE) motif of exported proteins including RESA, EMP2, EMP3, KAHRP, RIF/Rifin and STEVOR. Also, by regulating protein export, plays an essential role in gametocyte development and thus, parasite transmission to the mosquito vector. This is Plasmepsin V from Plasmodium falciparum (isolate 3D7).